The chain runs to 124 residues: T cell receptor beta variable 13 (124 aa).

Residues 1 to 31 (MLSPDLPDSAWNTRLLCRVMLCLLGAGSVAA) form the signal peptide. Positions 32–124 (GVIQSPRHLI…SALYFCASSL (93 aa)) constitute an Ig-like domain. Cys-52 and Cys-120 are disulfide-bonded. Asn-106 carries an N-linked (GlcNAc...) asparagine glycan.

Alpha-beta TR is a heterodimer composed of an alpha and beta chain; disulfide-linked. The alpha-beta TR is associated with the transmembrane signaling CD3 coreceptor proteins to form the TR-CD3 (TcR or TCR). The assembly of alpha-beta TR heterodimers with CD3 occurs in the endoplasmic reticulum where a single alpha-beta TR heterodimer associates with one CD3D-CD3E heterodimer, one CD3G-CD3E heterodimer and one CD247 homodimer forming a stable octameric structure. CD3D-CD3E and CD3G-CD3E heterodimers preferentially associate with TR alpha and TR beta chains, respectively. The association of the CD247 homodimer is the last step of TcR assembly in the endoplasmic reticulum and is required for transport to the cell surface.

It localises to the cell membrane. Functionally, v region of the variable domain of T cell receptor (TR) beta chain that participates in the antigen recognition. Alpha-beta T cell receptors are antigen specific receptors which are essential to the immune response and are present on the cell surface of T lymphocytes. Recognize peptide-major histocompatibility (MH) (pMH) complexes that are displayed by antigen presenting cells (APC), a prerequisite for efficient T cell adaptive immunity against pathogens. Binding of alpha-beta TR to pMH complex initiates TR-CD3 clustering on the cell surface and intracellular activation of LCK that phosphorylates the ITAM motifs of CD3G, CD3D, CD3E and CD247 enabling the recruitment of ZAP70. In turn ZAP70 phosphorylates LAT, which recruits numerous signaling molecules to form the LAT signalosome. The LAT signalosome propagates signal branching to three major signaling pathways, the calcium, the mitogen-activated protein kinase (MAPK) kinase and the nuclear factor NF-kappa-B (NF-kB) pathways, leading to the mobilization of transcription factors that are critical for gene expression and essential for T cell growth and differentiation. The T cell repertoire is generated in the thymus, by V-(D)-J rearrangement. This repertoire is then shaped by intrathymic selection events to generate a peripheral T cell pool of self-MH restricted, non-autoaggressive T cells. Post-thymic interaction of alpha-beta TR with the pMH complexes shapes TR structural and functional avidity. The protein is T cell receptor beta variable 13 of Homo sapiens (Human).